Consider the following 65-residue polypeptide: KKEGYLVGNDGCKYGCFTRPAQYCESECSLRKGTGGYCYAWLACYCYNMPDWVPTWNSAKNRCGK.

The 63-residue stretch at 2-64 (KEGYLVGNDG…TWNSAKNRCG (63 aa)) folds into the LCN-type CS-alpha/beta domain. Cystine bridges form between Cys-12–Cys-63, Cys-16–Cys-38, Cys-24–Cys-44, and Cys-28–Cys-46.

This sequence belongs to the long (4 C-C) scorpion toxin superfamily. Sodium channel inhibitor family. As to expression, expressed by the venom gland.

The protein localises to the secreted. Beta toxins bind voltage-independently at site-4 of sodium channels (Nav) and shift the voltage of activation toward more negative potentials thereby affecting sodium channel activation and promoting spontaneous and repetitive firing. This toxin acts on human Nav1.4/SCN4A and Nav1.6/SCN8A voltage-gated sodium channels. The polypeptide is Beta-mammal toxin Tma1 (Tityus macrochirus (Scorpion)).